We begin with the raw amino-acid sequence, 698 residues long: Elongation factor G 1 (698 aa).

The tr-type G domain maps to 8-290 (ERYRNIGICA…AVIEFLPSPT (283 aa)). Residues 17–24 (AHVDAGKT), 88–92 (DTPGH), and 142–145 (NKMD) contribute to the GTP site.

This sequence belongs to the TRAFAC class translation factor GTPase superfamily. Classic translation factor GTPase family. EF-G/EF-2 subfamily.

Its subcellular location is the cytoplasm. Catalyzes the GTP-dependent ribosomal translocation step during translation elongation. During this step, the ribosome changes from the pre-translocational (PRE) to the post-translocational (POST) state as the newly formed A-site-bound peptidyl-tRNA and P-site-bound deacylated tRNA move to the P and E sites, respectively. Catalyzes the coordinated movement of the two tRNA molecules, the mRNA and conformational changes in the ribosome. This chain is Elongation factor G 1, found in Vibrio cholerae serotype O1 (strain ATCC 39315 / El Tor Inaba N16961).